Here is a 90-residue protein sequence, read N- to C-terminus: DNA-directed RNA polymerase subunit omega (90 aa).

The protein belongs to the RNA polymerase subunit omega family. In terms of assembly, the RNAP catalytic core consists of 2 alpha, 1 beta, 1 beta' and 1 omega subunit. When a sigma factor is associated with the core the holoenzyme is formed, which can initiate transcription.

The enzyme catalyses RNA(n) + a ribonucleoside 5'-triphosphate = RNA(n+1) + diphosphate. In terms of biological role, promotes RNA polymerase assembly. Latches the N- and C-terminal regions of the beta' subunit thereby facilitating its interaction with the beta and alpha subunits. The chain is DNA-directed RNA polymerase subunit omega from Streptomyces griseus subsp. griseus (strain JCM 4626 / CBS 651.72 / NBRC 13350 / KCC S-0626 / ISP 5235).